The sequence spans 790 residues: Kinesin-like protein KIN-14D (790 aa).

Disordered stretches follow at residues 1–56 (MPLR…DVGS) and 116–139 (DKEN…LDAK). A globular region spans residues 1–66 (MPLRNQNRAP…TEECGKVEFT (66 aa)). A compositionally biased stretch (basic and acidic residues) spans 16–33 (VKKEALSSIPFDKRRKET). Over residues 34 to 55 (QGTGRRQVLSTVNRQDANSDVG) the composition is skewed to polar residues. Coiled coils occupy residues 117 to 316 (KENL…HVVQ) and 347 to 426 (SLEE…LELK). Over residues 127-139 (AEKRYSDKELDAK) the composition is skewed to basic and acidic residues. A Kinesin motor domain is found at 428–769 (NIRVFCRVRP…LRFAARVNAC (342 aa)). Residue 513–520 (GQTGSGKT) participates in ATP binding.

This sequence belongs to the TRAFAC class myosin-kinesin ATPase superfamily. Kinesin family. KIN-14 subfamily. In terms of tissue distribution, slightly expressed in anther lobes with pollen mother cells at anther stage 5. Strongly expressed at anther stage 6 in the tapetum and meiotic cells. Also detected in the gynoecium and the ovule.

It is found in the cytoplasm. The protein localises to the cytoskeleton. The protein resides in the phragmoplast. In terms of biological role, kinesin that supports microtubule movement in an ATP-dependent manner and that functions as a minus-end directed motor as well as a plus-end tracking protein. During mitosis, is involved in early spindle assembly. Participates in the capture of antiparallel interpolar microtubules and helps in generating force to coalign microtubules. This Arabidopsis thaliana (Mouse-ear cress) protein is Kinesin-like protein KIN-14D.